Here is a 498-residue protein sequence, read N- to C-terminus: Glycerol kinase (498 aa).

Residue Thr-12 coordinates ADP. Residues Thr-12, Thr-13, and Ser-14 each contribute to the ATP site. Thr-12 serves as a coordination point for sn-glycerol 3-phosphate. Arg-16 contacts ADP. Residues Arg-82, Glu-83, Tyr-134, and Asp-243 each coordinate sn-glycerol 3-phosphate. Glycerol is bound by residues Arg-82, Glu-83, Tyr-134, Asp-243, and Gln-244. Residues Thr-265 and Gly-308 each coordinate ADP. The ATP site is built by Thr-265, Gly-308, Gln-312, and Gly-409. Residues Gly-409 and Asn-413 each contribute to the ADP site.

It belongs to the FGGY kinase family. Homotetramer and homodimer (in equilibrium).

It carries out the reaction glycerol + ATP = sn-glycerol 3-phosphate + ADP + H(+). The protein operates within polyol metabolism; glycerol degradation via glycerol kinase pathway; sn-glycerol 3-phosphate from glycerol: step 1/1. Its activity is regulated as follows. Activated by phosphorylation and inhibited by fructose 1,6-bisphosphate (FBP). Functionally, key enzyme in the regulation of glycerol uptake and metabolism. Catalyzes the phosphorylation of glycerol to yield sn-glycerol 3-phosphate. The polypeptide is Glycerol kinase (Clostridium botulinum (strain Langeland / NCTC 10281 / Type F)).